The sequence spans 117 residues: Multidrug resistance protein EbrB (117 aa).

4 helical membrane-spanning segments follow: residues 3 to 23 (GLLYLALAIVSEVFGSTMLKL), 31 to 51 (WPIAGVIVGFLSAFTFLSFSL), 59 to 79 (AYATWSGVGTALTAIVGFLLF), and 81 to 101 (ETISLKGVFGLTLVIAGVVVL).

It belongs to the drug/metabolite transporter (DMT) superfamily. Small multidrug resistance (SMR) (TC 2.A.7.1) family. EbrA/EbrB subfamily. The efflux pump is composed of EbrA and EbrB.

Its subcellular location is the cell membrane. Part of a multidrug efflux pump. Confers resistance to cationic lipophilic dyes such as ethidium bromide, acriflavine, pyronine Y and safranin O. The efflux is probably coupled to an influx of protons. This is Multidrug resistance protein EbrB (ebrB) from Bacillus subtilis (strain 168).